The primary structure comprises 633 residues: ATP-dependent clpX-like chaperone, mitochondrial (633 aa).

A mitochondrion-targeting transit peptide spans 1–56 (MPSCGACTCGAAAVRLITSSLASAQRGISGGRIHMSVLGRLGTFETQILQRAPLRS). The disordered stretch occupies residues 68-100 (DGISKDGSGDGNKKSASEGSSKKSGSGNSGKGG). A compositionally biased stretch (basic and acidic residues) spans 69–83 (GISKDGSGDGNKKSA). Residues 84–93 (SEGSSKKSGS) show a composition bias toward low complexity. In terms of domain architecture, ClpX-type ZB spans 93–146 (SGNSGKGGNQLRCPKCGDLCTHVETFVSSTRFVKCEKCHHFFVVLSEADSKKSI). The Zn(2+) site is built by Cys-105, Cys-108, Cys-127, and Cys-130. ATP is bound at residue 294–301 (PTGSGKTL). Lys-437 is modified (N6-acetyllysine). Basic and acidic residues predominate over residues 598–610 (KEPGYIRAPTKES). The tract at residues 598 to 633 (KEPGYIRAPTKESSEEEYDSGVEEEGWPRQADAANS) is disordered. Residues 611-622 (SEEEYDSGVEEE) show a composition bias toward acidic residues. Residue Ser-617 is modified to Phosphoserine.

It belongs to the ClpX chaperone family. Homohexamer that forms a ring structure; this hexamerization requires ATP binding. Component of the ClpXP complex formed by the assembly of two CLPP heptameric rings with two CLPX hexameric rings, giving rise to a symmetrical structure with two central CLPP rings flanked by a CLPX ring at either end of the complex. Interacts with TFAM. Higher expression in skeletal muscle and heart and to a lesser extent in liver, brain, placenta, lung, kidney and pancreas.

It is found in the mitochondrion. It localises to the mitochondrion matrix. The protein localises to the mitochondrion nucleoid. It catalyses the reaction ATP + H2O = ADP + phosphate + H(+). Its function is as follows. ATP-dependent chaperone that functions as an unfoldase. As part of the ClpXP protease complex, it recognizes specific protein substrates, unfolds them using energy derived from ATP hydrolysis, and then translocates them to the proteolytic subunit (CLPP) of the ClpXP complex for degradation. Thanks to its chaperone activity, it also functions in the incorporation of the pyridoxal phosphate cofactor into 5-aminolevulinate synthase, thereby activating 5-aminolevulinate (ALA) synthesis, the first step in heme biosynthesis. This chaperone is also involved in the control of mtDNA nucleoid distribution, by regulating mitochondrial transcription factor A (TFAM) activity. The polypeptide is ATP-dependent clpX-like chaperone, mitochondrial (Homo sapiens (Human)).